The following is a 520-amino-acid chain: MSRAAAKFKIPMPVTKADFAFPSLRAFSIVVALDKQHGIGDGESIPWRVPEDMAFFKDQTTLLRNKKPPTDKKRNAVVMGRKTWESVPVKFRPLKGRLNVVLSSKATVEELLAPLPEEKRAAAAQDIVVVNGGLAAAVRLLARPPYCSSIETAYCVGGAQVYADAMLSPCVEKLQEVYLTRIHTTAPACTRFFPFPPENAATAWDLASSQGRRKSAVDGLEFEICKYVPRNHEERQYLELIDRIMKTGIAKEDRTGVGTLSLFGAQMRFSLRDNRLPLLTTKRVFWRGVCEELLWFLRGETNAQLLADKDIHIWDGNGSREFLDSRGLTENTEMDLGPVYGFQWRHFGAEYRGLEANYDGEGVDQIKFIVETIKANPNDRRLLFTAWNPCALHKMALPPCHLLAQFYVNTEKSELSCMLYQRSCDMGLGVPFNIASYALLTILIAKATGLRPGELVHTLGDAHVYRSHIDALKAQLERVPHAFPTLVFKEERQFLEDYELMDMEVIDYVPHPPIKMEMAV.

The DHFR domain occupies 26-229 (AFSIVVALDK…LEFEICKYVP (204 aa)). Val-30 provides a ligand contact to substrate. NADP(+) contacts are provided by residues Ala-32 and 38-44 (GIGDGES). Residue Asp-52 coordinates substrate. NADP(+)-binding positions include 81–83 (RKT), 102–105 (LSSK), and 157–164 (GGAQVYAD). Residues Tyr-162 and Thr-180 each coordinate substrate. The thymidylate synthase stretch occupies residues 234 to 520 (ERQYLELIDR…HPPIKMEMAV (287 aa)). Arg-254 contributes to the dUMP binding site. Cys-400 is a catalytic residue. Residues His-401, 421–425 (QRSCD), Asn-433, and 463–465 (HVY) contribute to the dUMP site.

The protein in the N-terminal section; belongs to the dihydrofolate reductase family. This sequence in the C-terminal section; belongs to the thymidylate synthase family.

The enzyme catalyses (6S)-5,6,7,8-tetrahydrofolate + NADP(+) = 7,8-dihydrofolate + NADPH + H(+). The catalysed reaction is dUMP + (6R)-5,10-methylene-5,6,7,8-tetrahydrofolate = 7,8-dihydrofolate + dTMP. Its pathway is cofactor biosynthesis; tetrahydrofolate biosynthesis; 5,6,7,8-tetrahydrofolate from 7,8-dihydrofolate: step 1/1. Bifunctional enzyme. Involved in de novo dTMP biosynthesis. Key enzyme in folate metabolism. Catalyzes an essential reaction for de novo glycine and purine synthesis, DNA precursor synthesis, and for the conversion of dUMP to dTMP. The chain is Bifunctional dihydrofolate reductase-thymidylate synthase from Leishmania amazonensis.